A 98-amino-acid polypeptide reads, in one-letter code: Large ribosomal subunit protein uL23 (98 aa).

The protein belongs to the universal ribosomal protein uL23 family. As to quaternary structure, part of the 50S ribosomal subunit. Contacts protein L29, and trigger factor when it is bound to the ribosome.

Its function is as follows. One of the early assembly proteins it binds 23S rRNA. One of the proteins that surrounds the polypeptide exit tunnel on the outside of the ribosome. Forms the main docking site for trigger factor binding to the ribosome. In Thioalkalivibrio sulfidiphilus (strain HL-EbGR7), this protein is Large ribosomal subunit protein uL23.